The following is a 112-amino-acid chain: UPF0342 protein SSU05_1260 (112 aa).

This sequence belongs to the UPF0342 family.

This Streptococcus suis (strain 05ZYH33) protein is UPF0342 protein SSU05_1260.